Reading from the N-terminus, the 396-residue chain is L-lactate dehydrogenase (396 aa).

Positions 1–380 (MIISAASDYR…TQDSLVQGLG (380 aa)) constitute an FMN hydroxy acid dehydrogenase domain. Tyr24 contributes to the substrate binding site. FMN contacts are provided by Ser106 and Gln127. Tyr129 contributes to the substrate binding site. FMN is bound at residue Thr155. A substrate-binding site is contributed by Arg164. An FMN-binding site is contributed by Lys251. Catalysis depends on His275, which acts as the Proton acceptor. Position 278 (Arg278) interacts with substrate. Residue 306–330 (DSGIRNGLDVVRMIALGADTVLLGR) coordinates FMN.

Belongs to the FMN-dependent alpha-hydroxy acid dehydrogenase family. FMN serves as cofactor.

It is found in the cell inner membrane. It carries out the reaction (S)-lactate + A = pyruvate + AH2. Functionally, catalyzes the conversion of L-lactate to pyruvate. Is coupled to the respiratory chain. The protein is L-lactate dehydrogenase of Shigella flexneri serotype 5b (strain 8401).